The chain runs to 24 residues: Pseudin-2 (24 aa).

As to expression, expressed by the skin glands.

Its subcellular location is the secreted. Its function is as follows. Antimicrobial peptide with activity against fungus (C.albicans) and Gram-positive and Gram-negative bacteria (S.aureus and E.coli). Also has low hemolytic activity against human erythrocytes. This chain is Pseudin-2, found in Pseudis paradoxa (Paradoxical frog).